Consider the following 55-residue polypeptide: Variant surface glycoprotein ETAT 1.2 (55 aa).

N34 carries an N-linked (GlcNAc...) asparagine glycan. N38 carries the GPI-anchor amidated asparagine lipid modification. The propeptide at 39–55 (NSFAIKTSTLLLAVLLF) is removed in mature form.

The protein localises to the cell membrane. VSG forms a coat on the surface of the parasite. The trypanosome evades the immune response of the host by expressing a series of antigenically distinct VSGs from an estimated 1000 VSG genes. In Trypanosoma brucei rhodesiense, this protein is Variant surface glycoprotein ETAT 1.2.